We begin with the raw amino-acid sequence, 417 residues long: Secernin-3 (417 aa).

The propeptide occupies M1–S5. The active site involves C6. Position 6 is a glyoxylic acid (Cys); alternate (C6). C6 is modified (pyruvic acid (Cys); alternate).

The protein belongs to the peptidase C69 family. Secernin subfamily.

Plays a role in thermal nociception. In Danio rerio (Zebrafish), this protein is Secernin-3 (scrn3).